The primary structure comprises 68 residues: Neuronal regeneration-related protein (68 aa).

This Gallus gallus (Chicken) protein is Neuronal regeneration-related protein (NREP).